Reading from the N-terminus, the 842-residue chain is Leucine--tRNA ligase (842 aa).

The 'HIGH' region signature appears at 44-55 (PYPSANGLHVGH). The 'KMSKS' region signature appears at 619 to 623 (KMSKS). Lys622 is a binding site for ATP.

The protein belongs to the class-I aminoacyl-tRNA synthetase family.

The protein resides in the cytoplasm. The enzyme catalyses tRNA(Leu) + L-leucine + ATP = L-leucyl-tRNA(Leu) + AMP + diphosphate. This Borrelia duttonii (strain Ly) protein is Leucine--tRNA ligase.